Reading from the N-terminus, the 596-residue chain is Elongation factor 4 (596 aa).

The tr-type G domain maps to 2 to 184; sequence SHIRNFSIIA…RLVHTIPAPE (183 aa). GTP is bound by residues 14-19 and 131-134; these read DHGKST and NKMD.

It belongs to the TRAFAC class translation factor GTPase superfamily. Classic translation factor GTPase family. LepA subfamily.

The protein localises to the cell inner membrane. It catalyses the reaction GTP + H2O = GDP + phosphate + H(+). Required for accurate and efficient protein synthesis under certain stress conditions. May act as a fidelity factor of the translation reaction, by catalyzing a one-codon backward translocation of tRNAs on improperly translocated ribosomes. Back-translocation proceeds from a post-translocation (POST) complex to a pre-translocation (PRE) complex, thus giving elongation factor G a second chance to translocate the tRNAs correctly. Binds to ribosomes in a GTP-dependent manner. In Pseudomonas putida (strain GB-1), this protein is Elongation factor 4.